We begin with the raw amino-acid sequence, 367 residues long: Protein trichome birefringence-like 39 (367 aa).

The chain crosses the membrane as a helical; Signal-anchor for type II membrane protein span at residues 7-29 (GNPSFLFFFFFFLCLSTVSAYIN). Residues 120–122 (GDS) carry the GDS motif motif. Residues 343 to 357 (DCSHWCLPGLPDTWN) carry the DCXHWCLPGXXDXWN motif motif.

This sequence belongs to the PC-esterase family. TBL subfamily.

The protein localises to the membrane. Functionally, may act as a bridging protein that binds pectin and other cell wall polysaccharides. Probably involved in maintaining esterification of pectins. May be involved in the specific O-acetylation of cell wall polymers. The sequence is that of Protein trichome birefringence-like 39 (TBL39) from Arabidopsis thaliana (Mouse-ear cress).